A 67-amino-acid polypeptide reads, in one-letter code: UPF0337 protein CC_0938 (67 aa).

Residues 37–67 (AAQKAKGDLQNKVGKAQDKARRRDQALNARL) form a disordered region. Positions 41–61 (AKGDLQNKVGKAQDKARRRDQ) are enriched in basic and acidic residues.

The protein belongs to the UPF0337 (CsbD) family.

This is UPF0337 protein CC_0938 from Caulobacter vibrioides (strain ATCC 19089 / CIP 103742 / CB 15) (Caulobacter crescentus).